The chain runs to 90 residues: Co-chaperonin GroES (90 aa).

It belongs to the GroES chaperonin family. Heptamer of 7 subunits arranged in a ring. Interacts with the chaperonin GroEL.

It localises to the cytoplasm. Together with the chaperonin GroEL, plays an essential role in assisting protein folding. The GroEL-GroES system forms a nano-cage that allows encapsulation of the non-native substrate proteins and provides a physical environment optimized to promote and accelerate protein folding. GroES binds to the apical surface of the GroEL ring, thereby capping the opening of the GroEL channel. This Helicobacter hepaticus (strain ATCC 51449 / 3B1) protein is Co-chaperonin GroES.